The sequence spans 269 residues: Hydroxyethylthiazole kinase (269 aa).

Met-46 is a substrate binding site. Residues Arg-122 and Thr-168 each coordinate ATP. Gly-195 contacts substrate.

The protein belongs to the Thz kinase family. Mg(2+) is required as a cofactor.

The enzyme catalyses 5-(2-hydroxyethyl)-4-methylthiazole + ATP = 4-methyl-5-(2-phosphooxyethyl)-thiazole + ADP + H(+). Its pathway is cofactor biosynthesis; thiamine diphosphate biosynthesis; 4-methyl-5-(2-phosphoethyl)-thiazole from 5-(2-hydroxyethyl)-4-methylthiazole: step 1/1. Functionally, catalyzes the phosphorylation of the hydroxyl group of 4-methyl-5-beta-hydroxyethylthiazole (THZ). In Chloroflexus aurantiacus (strain ATCC 29366 / DSM 635 / J-10-fl), this protein is Hydroxyethylthiazole kinase.